We begin with the raw amino-acid sequence, 91 residues long: UPF0335 protein BRADO1188 (91 aa).

It belongs to the UPF0335 family.

This chain is UPF0335 protein BRADO1188, found in Bradyrhizobium sp. (strain ORS 278).